A 257-amino-acid chain; its full sequence is 3-deoxy-manno-octulosonate cytidylyltransferase (257 aa).

Belongs to the KdsB family.

It localises to the cytoplasm. It carries out the reaction 3-deoxy-alpha-D-manno-oct-2-ulosonate + CTP = CMP-3-deoxy-beta-D-manno-octulosonate + diphosphate. It participates in nucleotide-sugar biosynthesis; CMP-3-deoxy-D-manno-octulosonate biosynthesis; CMP-3-deoxy-D-manno-octulosonate from 3-deoxy-D-manno-octulosonate and CTP: step 1/1. Its pathway is bacterial outer membrane biogenesis; lipopolysaccharide biosynthesis. Its function is as follows. Activates KDO (a required 8-carbon sugar) for incorporation into bacterial lipopolysaccharide in Gram-negative bacteria. The protein is 3-deoxy-manno-octulosonate cytidylyltransferase of Stenotrophomonas maltophilia (strain K279a).